A 309-amino-acid chain; its full sequence is Taste receptor type 2 member 43 (309 aa).

A topological domain (extracellular) is located at residue Met1. Residues 2 to 22 (ITFLPIIFSSLVVVTFVIGNF) traverse the membrane as a helical segment. At 23–46 (ANGFIALVNSIEWFKRQKISFADQ) the chain is on the cytoplasmic side. The chain crosses the membrane as a helical span at residues 47 to 67 (ILTALAVSRVGLLWVLLLNWY). The Extracellular portion of the chain corresponds to 68–86 (LTVLNPAFNSVEVRTTAYN). Residues 87-107 (IWAVINHFSNWLATSLSIFYL) traverse the membrane as a helical segment. At 108–126 (LKIANFSNFIFLHLKRRVK) the chain is on the cytoplasmic side. Residues 127–147 (SVILVMLLGPLLFLACHLFMI) traverse the membrane as a helical segment. Over 148-178 (NMNEIVRTKEFDGNMTWKIKLKSAMYFSNMT) the chain is Extracellular. Residues Asn161 and Asn176 are each glycosylated (N-linked (GlcNAc...) asparagine). A helical transmembrane segment spans residues 179 to 199 (VTMVANLVPFTLTLLSFLLLI). The Cytoplasmic segment spans residues 200 to 229 (CSLCKHLKKMQLHGKGSQDPSTKVHIKALQ). Residues 230–250 (TVISFLLLCAIYFLSIMISVW) form a helical membrane-spanning segment. Topologically, residues 251-259 (SFGSLENKP) are extracellular. A helical membrane pass occupies residues 260–280 (VFMFCKAIRFSYPSIHPFILI). Residues 281-309 (WGNKKLKQTFLSVFWQMRYWVKGEKTSSP) are Cytoplasmic-facing.

The protein belongs to the G-protein coupled receptor T2R family.

It is found in the membrane. It localises to the cell projection. The protein resides in the cilium membrane. Its function is as follows. Gustducin-coupled receptor immplicated in the perception of bitter compounds in the oral cavity and the gastrointestinal tract. Signals through PLCB2 and the calcium-regulated cation channel TRPM5. Activated by the sulfonyl amide sweeteners saccharin and acesulfame K. In airway epithelial cells, binding of bitter compounds increases the intracellular calcium ion concentration and stimulates ciliary beat frequency. May act as chemosensory receptors in airway epithelial cells to detect and eliminate potential noxious agents from the airways. The sequence is that of Taste receptor type 2 member 43 (TAS2R43) from Pan paniscus (Pygmy chimpanzee).